A 481-amino-acid chain; its full sequence is MRALPLDIGPLHFVGIGGIGMSGIAEVLHNLGYRVQGSDLSDNANVKRLRDLGIPIAIGHKAANLGDAQVVVISSAVKASNPEVMDARARFLPVVRRAEMLGELMRLKWSIAVAGTHGKTTTTSLVAQLLDAAGLDPTVINGGILNARGTNAYLGTGEWMVVEADESDGTFTKLPATISLVTNIDPEHLDFYGTFDKVREAFRAFIHNLPFYGFACMCIDHPEVQAMIPQLQDRKIITYGLSPQADIRGANVTLGPRGARFDVILTDRAGGGSRTIEGIRLPMYGRHNVLNALGAIGIAAEMGIDDAVIRDGLYHFEGVKRRFTRTGDAGGVTVIDDYGHHPVEIAAVLKAARDATEREVIAVVQPHRYSRLNSLFEDFCTCFNDADQVVVADVYAAGEQPIPGASKEALAEGLKVHGHKSVHVLTNEQALPELIARIAKPGDLVVCLGAGSISTWANALPKQLEAVQGRRRQTTLAGGAP.

Gly115 to Thr121 is a binding site for ATP.

It belongs to the MurCDEF family.

It localises to the cytoplasm. It carries out the reaction UDP-N-acetyl-alpha-D-muramate + L-alanine + ATP = UDP-N-acetyl-alpha-D-muramoyl-L-alanine + ADP + phosphate + H(+). The protein operates within cell wall biogenesis; peptidoglycan biosynthesis. Its function is as follows. Cell wall formation. The sequence is that of UDP-N-acetylmuramate--L-alanine ligase from Rhodospirillum rubrum (strain ATCC 11170 / ATH 1.1.1 / DSM 467 / LMG 4362 / NCIMB 8255 / S1).